A 620-amino-acid chain; its full sequence is MAU2 chromatid cohesion factor homolog (620 aa).

2 TPR repeats span residues 452 to 485 (GGFY…ANAE) and 492 to 525 (SCSL…ASKI).

The protein belongs to the SCC4/mau-2 family. As to quaternary structure, interacts with Nipped-B to form the cohesin loading complex.

It localises to the nucleus. Its subcellular location is the nucleoplasm. In terms of biological role, required for association of the cohesin complex with chromatin during interphase. Plays a role in sister chromatid cohesion and normal progression through prometaphase. The sequence is that of MAU2 chromatid cohesion factor homolog from Drosophila persimilis (Fruit fly).